A 117-amino-acid polypeptide reads, in one-letter code: Ribosome-binding factor A (117 aa).

It belongs to the RbfA family. Monomer. Binds 30S ribosomal subunits, but not 50S ribosomal subunits or 70S ribosomes.

The protein resides in the cytoplasm. One of several proteins that assist in the late maturation steps of the functional core of the 30S ribosomal subunit. Associates with free 30S ribosomal subunits (but not with 30S subunits that are part of 70S ribosomes or polysomes). Required for efficient processing of 16S rRNA. May interact with the 5'-terminal helix region of 16S rRNA. The polypeptide is Ribosome-binding factor A (Blochmanniella floridana).